A 550-amino-acid chain; its full sequence is Chaperonin GroEL (550 aa).

ATP-binding positions include 30-33 (TLGP), K51, 87-91 (DGTTT), G415, 479-481 (NAA), and D495.

This sequence belongs to the chaperonin (HSP60) family. As to quaternary structure, forms a cylinder of 14 subunits composed of two heptameric rings stacked back-to-back. Interacts with the co-chaperonin GroES.

Its subcellular location is the cytoplasm. The enzyme catalyses ATP + H2O + a folded polypeptide = ADP + phosphate + an unfolded polypeptide.. Together with its co-chaperonin GroES, plays an essential role in assisting protein folding. The GroEL-GroES system forms a nano-cage that allows encapsulation of the non-native substrate proteins and provides a physical environment optimized to promote and accelerate protein folding. The sequence is that of Chaperonin GroEL from Burkholderia mallei (strain NCTC 10247).